We begin with the raw amino-acid sequence, 154 residues long: Ribosome maturation factor RimP (154 aa).

Belongs to the RimP family.

It is found in the cytoplasm. Required for maturation of 30S ribosomal subunits. The sequence is that of Ribosome maturation factor RimP from Salmonella gallinarum (strain 287/91 / NCTC 13346).